The chain runs to 329 residues: GTPase Obg (329 aa).

The Obg domain occupies 1-159 (MQFIDQACIS…WLLHLELKLL (159 aa)). Positions 160–328 (AEVGIIGLPN…LLKNVWEKLE (169 aa)) constitute an OBG-type G domain. ATP is bound by residues 166-173 (GLPNAGKS), 191-195 (FTTLI), 213-216 (DIPG), 280-283 (NKKE), and 309-311 (SAA). Residues serine 173 and threonine 193 each coordinate Mg(2+).

Belongs to the TRAFAC class OBG-HflX-like GTPase superfamily. OBG GTPase family. Monomer. It depends on Mg(2+) as a cofactor.

It is found in the cytoplasm. An essential GTPase which binds GTP, GDP and possibly (p)ppGpp with moderate affinity, with high nucleotide exchange rates and a fairly low GTP hydrolysis rate. Plays a role in control of the cell cycle, stress response, ribosome biogenesis and in those bacteria that undergo differentiation, in morphogenesis control. The chain is GTPase Obg from Prochlorococcus marinus (strain MIT 9211).